A 400-amino-acid chain; its full sequence is Homoserine O-acetyltransferase (400 aa).

Residues Met-1–Asp-22 are disordered. Residues Asn-64 to Asp-374 enclose the AB hydrolase-1 domain. Ser-169 serves as the catalytic Nucleophile. Arg-239 is a binding site for substrate. Residues Asp-335 and His-368 contribute to the active site. Asp-369 contacts substrate.

This sequence belongs to the AB hydrolase superfamily. MetX family. As to quaternary structure, homodimer.

It is found in the cytoplasm. The catalysed reaction is L-homoserine + acetyl-CoA = O-acetyl-L-homoserine + CoA. It participates in amino-acid biosynthesis; L-methionine biosynthesis via de novo pathway; O-acetyl-L-homoserine from L-homoserine: step 1/1. Transfers an acetyl group from acetyl-CoA to L-homoserine, forming acetyl-L-homoserine. This is Homoserine O-acetyltransferase from Rhodopseudomonas palustris (strain HaA2).